A 738-amino-acid chain; its full sequence is Dipeptidyl peptidase 3 (738 aa).

The residue at position 2 (Ala-2) is an N-acetylalanine. A Zn(2+)-binding site is contributed by His-450. The active site involves Glu-451. 2 residues coordinate Zn(2+): His-455 and Glu-508.

It belongs to the peptidase M49 family. Zn(2+) is required as a cofactor.

The protein localises to the cytoplasm. Its subcellular location is the cytosol. The enzyme catalyses Release of an N-terminal dipeptide from a peptide comprising four or more residues, with broad specificity. Also acts on dipeptidyl 2-naphthylamides.. Its function is as follows. Cleaves and degrades bioactive peptides, including angiotensin, Leu-enkephalin and Met-enkephalin. Also cleaves Arg-Arg-beta-naphthylamide (in vitro). This chain is Dipeptidyl peptidase 3 (Dpp3), found in Mus musculus (Mouse).